Here is a 394-residue protein sequence, read N- to C-terminus: uncharacterized protein (394 aa).

2 helical membrane passes run 31–51 (LAILSLFLGIAACILIALSGL) and 57–77 (LIIALSLISIIVLSTGISLLI).

The protein belongs to the chlamydial CPn_0129/CT_036/TC_0306 family.

Its subcellular location is the cell membrane. This is an uncharacterized protein from Chlamydia pneumoniae (Chlamydophila pneumoniae).